The sequence spans 425 residues: Pre-mRNA-splicing factor RBM22 (425 aa).

The segment at R159–P186 adopts a C3H1-type zinc-finger fold. The RRM domain maps to T232–S305. Disordered regions lie at residues R304–P331 and H384–P425. The segment covering M389–L399 has biased composition (pro residues).

It belongs to the SLT11 family. In terms of assembly, component of the pre-catalytic and catalytic spliceosome complexes. Component of the postcatalytic spliceosome P complex.

Its subcellular location is the nucleus. The protein resides in the cytoplasm. In terms of biological role, required for pre-mRNA splicing as component of the activated spliceosome. Involved in the first step of pre-mRNA splicing. Binds directly to the internal stem-loop (ISL) domain of the U6 snRNA and to the pre-mRNA intron near the 5' splice site during the activation and catalytic phases of the spliceosome cycle. Required for normal early embryogenesis. This is Pre-mRNA-splicing factor RBM22 (rbm22) from Danio rerio (Zebrafish).